Reading from the N-terminus, the 607-residue chain is Albumin (607 aa).

Positions Met-1 to Ser-18 are cleaved as a signal peptide. Residues Arg-19 to Arg-24 constitute a propeptide that is removed on maturation. Albumin domains lie at Arg-19–Lys-209, Glu-210–Pro-402, and Leu-403–Ala-600. His-27 lines the Cu cation pocket. At Ser-29 the chain carries Phosphoserine. Ca(2+)-binding residues include Glu-30 and Asp-37. A disulfide bridge links Cys-77 with Cys-86. Phosphoserine occurs at positions 82 and 89. His-91 provides a ligand contact to Zn(2+). Disulfide bonds link Cys-99–Cys-115, Cys-114–Cys-125, Cys-147–Cys-192, Cys-191–Cys-200, Cys-223–Cys-269, and Cys-268–Cys-276. Thr-107 is subject to Phosphothreonine. Glu-267 contributes to the Ca(2+) binding site. Zn(2+) contacts are provided by His-270 and Asp-272. The Ca(2+) site is built by Asp-272, Glu-275, Asp-278, and Asp-282. Intrachain disulfides connect Cys-288–Cys-302, Cys-301–Cys-312, Cys-339–Cys-384, Cys-383–Cys-392, Cys-415–Cys-461, Cys-460–Cys-471, Cys-484–Cys-500, and Cys-499–Cys-510. Ser-442 is subject to Phosphoserine. 2 positions are modified to phosphothreonine: Thr-443 and Thr-445. Phosphoserine is present on Ser-512. 2 disulfides stabilise this stretch: Cys-537–Cys-582 and Cys-581–Cys-590. Lys-557 bears the N6-methyllysine mark. The residue at position 569 (Thr-569) is a Phosphothreonine. Lys-587 bears the N6-succinyllysine mark.

Belongs to the ALB/AFP/VDB family. In terms of assembly, interacts with FCGRT; this interaction regulates ALB homeostasis. Interacts with TASOR. In plasma, occurs in a covalently-linked complex with chromophore-bound alpha-1-microglobulin; this interaction does not prevent fatty acid binding to ALB. In terms of processing, phosphorylated by FAM20C in the extracellular medium. In terms of tissue distribution, plasma.

The protein localises to the secreted. In terms of biological role, binds water, Ca(2+), Na(+), K(+), fatty acids, hormones, bilirubin and drugs. Its main function is the regulation of the colloidal osmotic pressure of blood. Major zinc transporter in plasma, typically binds about 80% of all plasma zinc. Major calcium and magnesium transporter in plasma, binds approximately 45% of circulating calcium and magnesium in plasma. Potentially has more than two calcium-binding sites and might additionally bind calcium in a non-specific manner. The shared binding site between zinc and calcium at residue Asp-272 suggests a crosstalk between zinc and calcium transport in the blood. The rank order of affinity is zinc &gt; calcium &gt; magnesium. Binds to the bacterial siderophore enterobactin and inhibits enterobactin-mediated iron uptake of E.coli from ferric transferrin, and may thereby limit the utilization of iron and growth of enteric bacteria such as E.coli. Does not prevent iron uptake by the bacterial siderophore aerobactin. The protein is Albumin (ALB) of Equus caballus (Horse).